A 463-amino-acid chain; its full sequence is Glutamyl-tRNA(Gln) amidotransferase subunit A, mitochondrial (463 aa).

Residues Lys47 and Ser124 each act as charge relay system in the active site. Ser148 serves as the catalytic Acyl-ester intermediate.

Belongs to the amidase family. GatA subfamily. As to quaternary structure, subunit of the heterotrimeric GatFAB amidotransferase (AdT) complex, composed of A, B and F subunits.

The protein localises to the mitochondrion. It catalyses the reaction L-glutamyl-tRNA(Gln) + L-glutamine + ATP + H2O = L-glutaminyl-tRNA(Gln) + L-glutamate + ADP + phosphate + H(+). In terms of biological role, allows the formation of correctly charged Gln-tRNA(Gln) through the transamidation of misacylated Glu-tRNA(Gln) in the mitochondria. The reaction takes place in the presence of glutamine and ATP through an activated gamma-phospho-Glu-tRNA(Gln). The polypeptide is Glutamyl-tRNA(Gln) amidotransferase subunit A, mitochondrial (Eremothecium gossypii (strain ATCC 10895 / CBS 109.51 / FGSC 9923 / NRRL Y-1056) (Yeast)).